The sequence spans 441 residues: Ribulose bisphosphate carboxylase large chain (441 aa).

Lysine 5 carries the N6,N6,N6-trimethyllysine modification. Asparagine 114 and threonine 164 together coordinate substrate. The Proton acceptor role is filled by lysine 166. Substrate is bound at residue lysine 168. Mg(2+)-binding residues include lysine 192, aspartate 194, and glutamate 195. N6-carboxylysine is present on lysine 192. Histidine 285 functions as the Proton acceptor in the catalytic mechanism. 3 residues coordinate substrate: arginine 286, histidine 318, and serine 370.

The protein belongs to the RuBisCO large chain family. Type I subfamily. Heterohexadecamer of 8 large chains and 8 small chains; disulfide-linked. The disulfide link is formed within the large subunit homodimers. Requires Mg(2+) as cofactor. Post-translationally, the disulfide bond which can form in the large chain dimeric partners within the hexadecamer appears to be associated with oxidative stress and protein turnover.

The protein localises to the plastid. It is found in the chloroplast. The catalysed reaction is 2 (2R)-3-phosphoglycerate + 2 H(+) = D-ribulose 1,5-bisphosphate + CO2 + H2O. The enzyme catalyses D-ribulose 1,5-bisphosphate + O2 = 2-phosphoglycolate + (2R)-3-phosphoglycerate + 2 H(+). Its function is as follows. RuBisCO catalyzes two reactions: the carboxylation of D-ribulose 1,5-bisphosphate, the primary event in carbon dioxide fixation, as well as the oxidative fragmentation of the pentose substrate in the photorespiration process. Both reactions occur simultaneously and in competition at the same active site. The sequence is that of Ribulose bisphosphate carboxylase large chain from Pellaea andromedifolia (Coffee fern).